The chain runs to 820 residues: DNA replication helicase (820 aa).

Residue 90-97 coordinates ATP; sequence GTAGAGKT.

It belongs to the herpesviridae helicase family. As to quaternary structure, associates with the primase and the primase-associated factor to form the helicase-primase complex.

It is found in the host nucleus. Its function is as follows. Component of the helicase/primase complex. Unwinds the DNA at the replication forks and generates single-stranded DNA for both leading and lagging strand synthesis. The primase synthesizes short RNA primers on the lagging strand that the polymerase elongates using dNTPs. Possesses helicase-like motifs and therefore may act as the helicase subunit of the complex. The polypeptide is DNA replication helicase (Human herpesvirus 7 (strain JI) (HHV-7)).